Consider the following 247-residue polypeptide: Small ribosomal subunit protein uS2 (247 aa).

This sequence belongs to the universal ribosomal protein uS2 family.

In Pseudomonas syringae pv. tomato (strain ATCC BAA-871 / DC3000), this protein is Small ribosomal subunit protein uS2.